The primary structure comprises 330 residues: Polyprenyl transferase dpfgC (330 aa).

The N-linked (GlcNAc...) asparagine glycan is linked to Asn-34. 7 helical membrane-spanning segments follow: residues 105 to 125 (ALCVLAAYLFCGAGMVWNDWI), 146 to 166 (VTTTEAMVWMTLQVIMSWGVL), 175 to 192 (VLKHLIPVMVASVLYPFG), 199 to 219 (KLMIYPQYILAFTIAWPAIPG), 237 to 257 (CLPLCIMVFFWTIYLNTAYSY), 273 to 293 (NIAGNHIHVLLVLLVSPIILA), and 310 to 330 (NFILGVWTILACAAEVFLTSA).

The protein belongs to the UbiA prenyltransferase family. It depends on Mg(2+) as a cofactor.

Its subcellular location is the membrane. It functions in the pathway secondary metabolite biosynthesis; terpenoid biosynthesis. In terms of biological role, polyprenyl transferase; part of the gene cluster that mediates the biosynthesis of diterpenoid pyrones. The first step of the pathway is the synthesis of the alpha-pyrone moiety by the polyketide synthase dpfgA via condensation of one acetyl-CoA starter unit with 3 malonyl-CoA units and 2 methylations. The alpha-pyrone is then combined with geranylgeranyl pyrophosphate (GGPP) formed by the GGPP synthase dpfgD through the action of the prenyltransferase dpfgC to yield a linear alpha-pyrone diterpenoid. Subsequent steps in the diterpenoid pyrone biosynthetic pathway involve the decalin core formation, which is initiated by the epoxidation of the C10-C11 olefin by the FAD-dependent oxidoreductase dpfgE, and is followed by a cyclization cascade catalyzed by the terpene cyclase dpfgB. The short chain dehydrogenase/reductase dpfgG then oxidizes the 8S hydroxy group to a ketone and the short chain dehydrogenase/reductase dpfgH reduces the ketone to the 8R hydroxy group to yield higginsianin B. Higginsianin B is further methylated by the methyltransferase dpfgI to produce the intermediate named FDDP B. The cytochrome P450 monooxygenase dfgpJ then catalyzes a three-step oxidation at C-27 to generate a carboxylic acid as well as C-26 hydroxylation. Finally, methyltransferase dpfgK methylates the carboxylic acid generated by dpfgJ, yielding the final diterpenoid pyrones from the pathway which were named FDDP D and FDDP E. The protein is Polyprenyl transferase dpfgC of Gibberella zeae (strain ATCC MYA-4620 / CBS 123657 / FGSC 9075 / NRRL 31084 / PH-1) (Wheat head blight fungus).